The primary structure comprises 522 residues: Occludin (522 aa).

Residues 1 to 20 form a disordered region; sequence MSSRPLESPPPYRPDEFKPN. The Cytoplasmic segment spans residues 1 to 66; that stretch reads MSSRPLESPP…KWTSPPGVIR (66 aa). The region spanning 60-269 is the MARVEL domain; the sequence is SPPGVIRILS…IIFFAVKTRR (210 aa). A helical transmembrane segment spans residues 67 to 89; it reads ILSMLIIVMCIAIFACVASTLAW. The Extracellular portion of the chain corresponds to 90–135; sequence DRGYGTSLLGGSVGYPYGGSGFGSYGSGYGYGYGYGYGYGGYTDPR. Residues 136-160 form a helical membrane-spanning segment; sequence AAKGFMLAMAAFCFIAALVIFVTSV. At 161–170 the chain is on the cytoplasmic side; it reads IRSEMSRTRR. A helical transmembrane segment spans residues 171–195; sequence YYLSVIIVSAILGIMVFIATIVYIM. Residues 196 to 243 are Extracellular-facing; it reads GVNPTAQSSGSLYGSQIYALCNQFYTPAATGLYVDQYLYHYCVVDPQE. A disulfide bond links C216 and C237. The chain crosses the membrane as a helical span at residues 244–265; it reads AIAIVLGFMIIVAFALIIFFAV. At 266-522 the chain is on the cytoplasmic side; sequence KTRRKMDRYD…MVGDYDRQKT (257 aa). S302 carries the post-translational modification Phosphoserine. The residue at position 305 (T305) is a Phosphothreonine. S313, S321, and S340 each carry phosphoserine. The interval 360 to 407 is disordered; sequence VDDFRQPRYSSGGNFETPSKRAPAKGRAGRSKRTEQDHYETDYTTGGE. The span at 367–376 shows a compositional bias: polar residues; that stretch reads RYSSGGNFET. At Y368 the chain carries Phosphotyrosine. A phosphoserine mark is found at S369 and S370. Basic residues predominate over residues 381–390; it reads APAKGRAGRS. Over residues 391–400 the composition is skewed to basic and acidic residues; that stretch reads KRTEQDHYET. Phosphotyrosine is present on residues Y398 and Y402. Phosphothreonine; by PKC/PRKCH is present on residues T403 and T404. S408 is modified (phosphoserine). One can recognise an OCEL domain in the interval 414–522; that stretch reads EDWIREYPPI…MVGDYDRQKT (109 aa). Residues 426-489 adopt a coiled-coil conformation; the sequence is DQQRQLYKRN…EYNRLKQVKG (64 aa). Phosphoserine is present on S490.

Belongs to the ELL/occludin family. Interacts with TJP1/ZO1. Interacts with VAPA. Interacts with CLDN1, CLDN6, CLDN9, CLDN11, CLDN12 and CLDN17. Interacts with PLSCR1. Interacts with LSR, ILDR1 and ILDR2. Interacts with TJP2/ZO2. In terms of processing, dephosphorylated by PTPRJ. The tyrosine phosphorylation on Tyr-398 and Tyr-402 reduces its ability to interact with TJP1. Phosphorylation at Ser-490 also attenuates the interaction with TJP1. (Microbial infection) Cleaved by S.pyogenes SpeB protease; leading to its degradation. Degradation by SpeB promotes bacterial translocation across the host epithelial barrier. Localized at tight junctions of both epithelial and endothelial cells. Highly expressed in kidney. Not detected in testis.

The protein resides in the cell membrane. The protein localises to the cell junction. It localises to the tight junction. Functionally, may play a role in the formation and regulation of the tight junction (TJ) paracellular permeability barrier. It is able to induce adhesion when expressed in cells lacking tight junctions. In terms of biological role, (Microbial infection) Acts as a coreceptor for hepatitis C virus (HCV) in hepatocytes. This chain is Occludin (OCLN), found in Homo sapiens (Human).